A 232-amino-acid chain; its full sequence is 2-C-methyl-D-erythritol 4-phosphate cytidylyltransferase (232 aa).

Belongs to the IspD/TarI cytidylyltransferase family. IspD subfamily.

It carries out the reaction 2-C-methyl-D-erythritol 4-phosphate + CTP + H(+) = 4-CDP-2-C-methyl-D-erythritol + diphosphate. Its pathway is isoprenoid biosynthesis; isopentenyl diphosphate biosynthesis via DXP pathway; isopentenyl diphosphate from 1-deoxy-D-xylulose 5-phosphate: step 2/6. In terms of biological role, catalyzes the formation of 4-diphosphocytidyl-2-C-methyl-D-erythritol from CTP and 2-C-methyl-D-erythritol 4-phosphate (MEP). The chain is 2-C-methyl-D-erythritol 4-phosphate cytidylyltransferase from Nitrosospira multiformis (strain ATCC 25196 / NCIMB 11849 / C 71).